A 318-amino-acid chain; its full sequence is Acetyl-coenzyme A carboxylase carboxyl transferase subunit alpha (318 aa).

One can recognise a CoA carboxyltransferase C-terminal domain in the interval Asp-31–Ala-292.

This sequence belongs to the AccA family. As to quaternary structure, acetyl-CoA carboxylase is a heterohexamer composed of biotin carboxyl carrier protein (AccB), biotin carboxylase (AccC) and two subunits each of ACCase subunit alpha (AccA) and ACCase subunit beta (AccD).

The protein localises to the cytoplasm. It catalyses the reaction N(6)-carboxybiotinyl-L-lysyl-[protein] + acetyl-CoA = N(6)-biotinyl-L-lysyl-[protein] + malonyl-CoA. Its pathway is lipid metabolism; malonyl-CoA biosynthesis; malonyl-CoA from acetyl-CoA: step 1/1. In terms of biological role, component of the acetyl coenzyme A carboxylase (ACC) complex. First, biotin carboxylase catalyzes the carboxylation of biotin on its carrier protein (BCCP) and then the CO(2) group is transferred by the carboxyltransferase to acetyl-CoA to form malonyl-CoA. The sequence is that of Acetyl-coenzyme A carboxylase carboxyl transferase subunit alpha from Listeria monocytogenes serotype 4a (strain HCC23).